Here is a 177-residue protein sequence, read N- to C-terminus: Probable inosine/xanthosine triphosphatase (177 aa).

Belongs to the YjjX NTPase family. In terms of assembly, homodimer. It depends on Mg(2+) as a cofactor. The cofactor is Mn(2+).

The enzyme catalyses XTP + H2O = XDP + phosphate + H(+). The catalysed reaction is ITP + H2O = IDP + phosphate + H(+). Its function is as follows. Phosphatase that hydrolyzes non-canonical purine nucleotides such as XTP and ITP to their respective diphosphate derivatives. Probably excludes non-canonical purines from DNA/RNA precursor pool, thus preventing their incorporation into DNA/RNA and avoiding chromosomal lesions. The sequence is that of Probable inosine/xanthosine triphosphatase from Halalkalibacterium halodurans (strain ATCC BAA-125 / DSM 18197 / FERM 7344 / JCM 9153 / C-125) (Bacillus halodurans).